A 533-amino-acid chain; its full sequence is MAFGSPRNNSILAAAGFPRKVSTVAIAIGGLASFFVFGLLLRLSYPNSSSVGGIFYGIGNPEQVHVPLSLSNHTVNILQKSSDINAFDKNLTSDSSSGLPVVVSKSIPPPDFSSDRKLETPLTQEKEDLVSSDITEKTDVQSGERETNVSKAEDTPSASSPPDDVSETASAEPECDLYQGSWFYDPGGPLYTNNSCPVLTQMQNCQGNGRPDKGYENWRWKPSQCELPRFDARKFLELMKGKTLAFIGDSVARNQMESMLCLLWQVETPVNRGSRKMQRWYFKQSSVMIARIWSSWLVHQFNEKFDYAPEGVTKLKLDLPDERIMEAIPKFDVVVLSSGHWFAKQSVYILKEEIVGGQLWWPDKSKPMKVNNVDAFGISVETILKSMATHPNYSGLTIVRTFSPDHYEGGAWNTGGSCTGKEEPILPGKLVKNGFTEIMHEKQATGYNQAVDKVAENLKLKLKLMDITEAFGYRHDGHPGPFRSPDPNKITKRGPDGRPPPQDCLHWCMPGPVDTWNEMVLELIRRDRKSSST.

A helical; Signal-anchor for type II membrane protein membrane pass occupies residues 21–41; it reads VSTVAIAIGGLASFFVFGLLL. A disordered region spans residues 93 to 171; the sequence is SDSSSGLPVV…PDDVSETASA (79 aa). Positions 113–154 are enriched in basic and acidic residues; it reads SSDRKLETPLTQEKEDLVSSDITEKTDVQSGERETNVSKAED. The GDS motif motif lies at 248 to 250; sequence GDS. The tract at residues 475-502 is disordered; that stretch reads HDGHPGPFRSPDPNKITKRGPDGRPPPQ. A DCXHWCLPGXXDXWN motif motif is present at residues 503 to 517; it reads DCLHWCMPGPVDTWN.

It belongs to the PC-esterase family. TBL subfamily.

It is found in the membrane. Functionally, may act as a bridging protein that binds pectin and other cell wall polysaccharides. Probably involved in maintaining esterification of pectins. May be involved in the specific O-acetylation of cell wall polymers. The chain is Protein trichome birefringence-like 18 (TBL18) from Arabidopsis thaliana (Mouse-ear cress).